The primary structure comprises 101 residues: Phosphoprotein OPG062 (101 aa).

The tract at residues 48–76 (VDKPSSPASERRPSSPSRCERMNNPGKQV) is disordered. A phosphoserine mark is found at serine 53 and serine 62. Basic and acidic residues predominate over residues 56–68 (SERRPSSPSRCER).

The protein belongs to the orthopoxvirus OPG062 family. Self-associates to form high molecular-weight forms. Interacts with protein OPG157. Interacts with host RICTOR and RPTOR; these interactions disrupt the mTORC1 and mTORC2 crosstalk. Phosphorylated on two serines. While these phosphorylations do not play a role in virion assembly; they are essential for the interaction with host RICTOR and RPTOR.

It localises to the virion. Its function is as follows. Plays an essential role in virion assembly and morphogenesis. Also plays a role in the inhibition of host immune response by dysregulating mTOR. Sequesters host RICTOR and RPTOR, thereby disrupting mTORC1 and mTORC2 crosstalk. In turn, blocks the host antiviral response in part through mTOR-dependent degradation of cGAS, the primary poxvirus sensor. The protein is Phosphoprotein OPG062 (OPG062) of Variola virus (isolate Human/India/Ind3/1967) (VARV).